A 2533-amino-acid chain; its full sequence is Highly reducing polyketide synthase azaB (2533 aa).

The Ketosynthase family 3 (KS3) domain maps to 7–433; sequence TAPMAIIGMA…GSNAHAILES (427 aa). Active-site for beta-ketoacyl synthase activity residues include Cys180, His315, and His355. Residues 554–821 are malonyl-CoA:ACP transacylase (MAT) domain; that stretch reads WVFTGQGAQW…VEFESSFRHM (268 aa). An N-terminal hotdog fold region spans residues 946 to 1081; the sequence is SDLVGYSQPS…GRISVITTSD (136 aa). The region spanning 946–1254 is the PKS/mFAS DH domain; that stretch reads SDLVGYSQPS…CQSLGRALDR (309 aa). The dehydratase (DH) domain stretch occupies residues 947–1251; it reads DLVGYSQPSI…GLTCQSLGRA (305 aa). The active-site Proton acceptor; for dehydratase activity is His978. Residues 1097–1254 form a C-terminal hotdog fold region; the sequence is YNRRIDPRYM…CQSLGRALDR (158 aa). Residue Asp1163 is the Proton donor; for dehydratase activity of the active site. The segment at 1419-1554 is methyltransferase (CMet) domain; it reads TRQVSELVRL…GGKLILMETT (136 aa). Residues 1839 to 2155 form an enoyl reductase (ER) domain region; it reads GLIDTLVFHD…TGQHMGKIII (317 aa). The ketoreductase (KR) domain stretch occupies residues 2178–2349; that stretch reads ASYVIVGGLG…AVSLDLGIVR (172 aa). One can recognise a Carrier domain in the interval 2455–2532; sequence DAAALICQEL…DLSLRVATKR (78 aa). Ser2492 carries the O-(pantetheine 4'-phosphoryl)serine modification.

It functions in the pathway secondary metabolite biosynthesis. Its function is as follows. Highly reducing polyketide synthase; part of the gene cluster that mediates the biosynthesis of azaphilones, a class of fungal metabolites characterized by a highly oxygenated pyrano-quinone bicyclic core and exhibiting a broad range of bioactivities. In the first step, the non-reducing polyketide synthase azaA forms the hexaketide precursor from successive condensations of five malonyl-CoA units, presumably with a simple acetyl-CoA starter unit. The reactive polyketide chain then undergoes a PT-mediated C2-C7 cyclization to afford the aromatic ring and is eventually released as an aldehyde through the R-domain. The putative ketoreductase azaE is proposed to catalyze the reduction of the terminal ketone resulting in the early culture product FK17-P2a. The monooxygenase azaH was demonstrated to be the only enzyme required to convert FK17-P2a to azanigerone E. AzaH first hydroxylates the benzaldehyde intermediate FK17-P2a at C4, which triggers the formation of the pyran-ring to afford azanigerone E. In parallel, the 2,4-dimethylhexanoyl chain is synthesized by the HR-PKS azaB and is proposed to be transferred to the C4-hydroxyl of azanigerone E by the acyltransferase azaD directly from the ACP domain of azaB. Alternatively, the 2,4-dimethyl-hexanoyl chain may be offloaded from the HR-PKS as a carboxylic acid and converted to an acyl-CoA by azaF. The resulting acyl-CoA molecule could then be taken up as a substrate by AzaD to form azanigerone B. To yield the carboxylic acid substituent in azanigerone A, the hydroxypropyl side chain of azanigerone B would need to undergo a C-C oxidative cleavage catalyzed by cytochrome P450 AzaI. AzaI is proposed to act on a vicinal diol that leads to a C-C bond scission either through an alkoxyradical intermediate or a peroxy complex. In the biosynthesis of azanigerone A, azanigerone B first undergoes hydroxylation at C10, possibly catalyzed by one of the two FAD-dependent monooxygenases encoded in the cluster, azaG or azaL, resulting in the vicinal diol azanigerone C. Oxidative cleavage of azanigerone C by azaI would yield the corresponding aldehyde derivative of azanigerone A. Finally, the dehydrogenase azaJ is proposed to convert the aldehyde functional group into the carboxylic acid, completing the conversion from azanigerone B to azanigerone A. Alternatively, the oxidation of aldehyde to carboxylic acid may be catalyzed by the same P450 enzyme azaI via consecutive oxidation or by endogenous alcohol dehydrogenase. The polypeptide is Highly reducing polyketide synthase azaB (Aspergillus niger (strain ATCC 1015 / CBS 113.46 / FGSC A1144 / LSHB Ac4 / NCTC 3858a / NRRL 328 / USDA 3528.7)).